The sequence spans 254 residues: 5'/3'-nucleotidase SurE (254 aa).

Residues Asp8, Asp9, Ser39, and Asn92 each contribute to the a divalent metal cation site.

The protein belongs to the SurE nucleotidase family. The cofactor is a divalent metal cation.

It localises to the cytoplasm. It catalyses the reaction a ribonucleoside 5'-phosphate + H2O = a ribonucleoside + phosphate. It carries out the reaction a ribonucleoside 3'-phosphate + H2O = a ribonucleoside + phosphate. The catalysed reaction is [phosphate](n) + H2O = [phosphate](n-1) + phosphate + H(+). Nucleotidase with a broad substrate specificity as it can dephosphorylate various ribo- and deoxyribonucleoside 5'-monophosphates and ribonucleoside 3'-monophosphates with highest affinity to 3'-AMP. Also hydrolyzes polyphosphate (exopolyphosphatase activity) with the preference for short-chain-length substrates (P20-25). Might be involved in the regulation of dNTP and NTP pools, and in the turnover of 3'-mononucleotides produced by numerous intracellular RNases (T1, T2, and F) during the degradation of various RNAs. This is 5'/3'-nucleotidase SurE from Edwardsiella ictaluri (strain 93-146).